The chain runs to 396 residues: Lipopolysaccharide assembly protein B (396 aa).

A helical transmembrane segment spans residues 1-20 (MIELLFLLLPIAAAYGWYMG). At 21-396 (RRSAKKDQDD…IKPVSNQEHN (376 aa)) the chain is on the cytoplasmic side. TPR repeat units follow at residues 35-68 (LSRDYVTGVNFLLSNQTDKAVDLFLDMLQKQEIE), 77-109 (FEAELTLGNLFRSRGEVDRALRIHQALDLSPNY), 149-182 (ENALQQLLVIYQKTKEWKKAVNIAEKLAKIKPQE), and 221-254 (VRASLLLANLAMLDGQYQQAVKILENVLEQNPDY). The Fe cation site is built by Cys364, Cys367, Cys378, and Cys381.

Belongs to the LapB family.

It localises to the cell inner membrane. In terms of biological role, modulates cellular lipopolysaccharide (LPS) levels by regulating LpxC, which is involved in lipid A biosynthesis. May act by modulating the proteolytic activity of FtsH towards LpxC. May also coordinate assembly of proteins involved in LPS synthesis at the plasma membrane. The polypeptide is Lipopolysaccharide assembly protein B (Haemophilus influenzae (strain ATCC 51907 / DSM 11121 / KW20 / Rd)).